We begin with the raw amino-acid sequence, 123 residues long: Small ribosomal subunit protein uS11 (123 aa).

Belongs to the universal ribosomal protein uS11 family. In terms of assembly, part of the 30S ribosomal subunit. Interacts with proteins S7 and S18. Binds to IF-3.

Located on the platform of the 30S subunit, it bridges several disparate RNA helices of the 16S rRNA. Forms part of the Shine-Dalgarno cleft in the 70S ribosome. This chain is Small ribosomal subunit protein uS11, found in Coxiella burnetii (strain RSA 331 / Henzerling II).